We begin with the raw amino-acid sequence, 24 residues long: Transaldolase (24 aa).

The protein belongs to the transaldolase family.

The protein localises to the cytoplasm. It catalyses the reaction D-sedoheptulose 7-phosphate + D-glyceraldehyde 3-phosphate = D-erythrose 4-phosphate + beta-D-fructose 6-phosphate. Its pathway is carbohydrate degradation; pentose phosphate pathway; D-glyceraldehyde 3-phosphate and beta-D-fructose 6-phosphate from D-ribose 5-phosphate and D-xylulose 5-phosphate (non-oxidative stage): step 2/3. Functionally, transaldolase is important for the balance of metabolites in the pentose-phosphate pathway. This Capsicum annuum var. annuum (Red pepper) protein is Transaldolase.